The sequence spans 322 residues: Undecaprenyl-phosphate 4-deoxy-4-formamido-L-arabinose transferase (322 aa).

The Cytoplasmic segment spans residues 1–235 (MFEIHPVKKV…TCLTTTPLRM (235 aa)). Residues 236–256 (LSLLGSIIAIGGFSIAVLLVI) traverse the membrane as a helical segment. At 257–269 (LRLTFGPQWAAEG) the chain is on the periplasmic side. Residues 270–290 (VFMLFAVLFTFIGAQFIGMGL) form a helical membrane-spanning segment. Topologically, residues 291 to 322 (LGEYIGRIYTDVRARPRYFVQQVIRPSSKENE) are cytoplasmic.

Belongs to the glycosyltransferase 2 family.

Its subcellular location is the cell inner membrane. It catalyses the reaction UDP-4-deoxy-4-formamido-beta-L-arabinose + di-trans,octa-cis-undecaprenyl phosphate = 4-deoxy-4-formamido-alpha-L-arabinopyranosyl di-trans,octa-cis-undecaprenyl phosphate + UDP. The protein operates within glycolipid biosynthesis; 4-amino-4-deoxy-alpha-L-arabinose undecaprenyl phosphate biosynthesis; 4-amino-4-deoxy-alpha-L-arabinose undecaprenyl phosphate from UDP-4-deoxy-4-formamido-beta-L-arabinose and undecaprenyl phosphate: step 1/2. Its pathway is bacterial outer membrane biogenesis; lipopolysaccharide biosynthesis. Catalyzes the transfer of 4-deoxy-4-formamido-L-arabinose from UDP to undecaprenyl phosphate. The modified arabinose is attached to lipid A and is required for resistance to polymyxin and cationic antimicrobial peptides. The polypeptide is Undecaprenyl-phosphate 4-deoxy-4-formamido-L-arabinose transferase (Escherichia coli O139:H28 (strain E24377A / ETEC)).